The chain runs to 90 residues: Probable Fe(2+)-trafficking protein (90 aa).

Belongs to the Fe(2+)-trafficking protein family.

Functionally, could be a mediator in iron transactions between iron acquisition and iron-requiring processes, such as synthesis and/or repair of Fe-S clusters in biosynthetic enzymes. This chain is Probable Fe(2+)-trafficking protein, found in Polaromonas sp. (strain JS666 / ATCC BAA-500).